Here is a 707-residue protein sequence, read N- to C-terminus: Polyribonucleotide nucleotidyltransferase (707 aa).

The Mg(2+) site is built by Asp491 and Asp497. The region spanning 558 to 617 is the KH domain; the sequence is PRIEKIKIHPDKIGLLIGPGGKTIKKISAESGAEITIEDDGTVMIYSSSADSLEAAREMI. Positions 622 to 695 constitute an S1 motif domain; that stretch reads GEVTVGGIYR…EKGRYKFSRK (74 aa).

This sequence belongs to the polyribonucleotide nucleotidyltransferase family. Mg(2+) is required as a cofactor.

The protein localises to the cytoplasm. It carries out the reaction RNA(n+1) + phosphate = RNA(n) + a ribonucleoside 5'-diphosphate. Its function is as follows. Involved in mRNA degradation. Catalyzes the phosphorolysis of single-stranded polyribonucleotides processively in the 3'- to 5'-direction. This is Polyribonucleotide nucleotidyltransferase from Methylacidiphilum infernorum (isolate V4) (Methylokorus infernorum (strain V4)).